We begin with the raw amino-acid sequence, 505 residues long: L-carnitine/gamma-butyrobetaine antiporter (505 aa).

12 helical membrane-spanning segments follow: residues 10–30 (IEPKVFFPPLIIVGILCWLTV), 51–71 (WGWAFEWYMIVMLFGWFWLVF), 92–112 (IFMMFASCTSAAVLFWGSIEI), 143–163 (GPLPWATYSFLSVAFAYFFFV), 195–215 (FYLVALIFAMGTSLGLATPLV), 231–251 (LDAIIITCWIILNAICVACGL), 263–283 (SYLSFLMLGWVFIVSGASFIM), 316–336 (WTVFYWAWWVIYAIQMSIFLA), 347–367 (LCFGMVMGLTASTWILWTVLG), 403–423 (LSTATMWGFFILCFIATVTLI), 446–466 (LLVRIGWSVLVGIIGIVLLAL), and 475–495 (AIIAGGCPLFFVNIMVTLSFI).

It belongs to the BCCT transporter (TC 2.A.15) family. CaiT subfamily. In terms of assembly, homotrimer.

The protein localises to the cell inner membrane. It catalyses the reaction 4-(trimethylamino)butanoate(in) + (R)-carnitine(out) = 4-(trimethylamino)butanoate(out) + (R)-carnitine(in). The protein operates within amine and polyamine metabolism; carnitine metabolism. Functionally, catalyzes the exchange of L-carnitine for gamma-butyrobetaine. The protein is L-carnitine/gamma-butyrobetaine antiporter of Salmonella paratyphi A (strain ATCC 9150 / SARB42).